We begin with the raw amino-acid sequence, 1323 residues long: Glutamate receptor ionotropic, NMDA 2D (1323 aa).

An N-terminal signal peptide occupies residues 1–27 (MRGAGGPRGPRGPAKMLLLLALACASP). Topologically, residues 28–579 (FPEEVPGPGA…SPSAFLEPYS (552 aa)) are extracellular. Residue Asn-89 is glycosylated (N-linked (GlcNAc...) asparagine). A disulfide bridge links Cys-101 with Cys-345. 4 N-linked (GlcNAc...) asparagine glycosylation sites follow: Asn-349, Asn-363, Asn-381, and Asn-464. Disulfide bonds link Cys-452-Cys-480 and Cys-459-Cys-481. Residues Ser-536, Thr-538, and Arg-543 each coordinate L-glutamate. Asn-566 carries N-linked (GlcNAc...) asparagine glycosylation. A helical membrane pass occupies residues 580–601 (PAVWVMMFVMCLTVVAVTVFIF). Residues 602-626 (EYLSPVGYNRSLATGKRPGGSTFTI) are Cytoplasmic-facing. The discontinuously helical intramembrane region spans 627-638 (GKSIWLLWALVF). The pore-forming stretch occupies residues 628–647 (KSIWLLWALVFNNSVPVENP). The Cytoplasmic segment spans residues 639-650 (NNSVPVENPRGT). The chain crosses the membrane as a helical span at residues 651-671 (TSKIMVLVWAFFAVIFLASYT). Over 672–840 (ANLAAFMIQE…EVMSSKLDID (169 aa)) the chain is Extracellular. The N-linked (GlcNAc...) asparagine glycan is linked to Asn-712. L-glutamate contacts are provided by Ser-714, Thr-715, and Asp-756. Cys-770 and Cys-825 form a disulfide bridge. The helical transmembrane segment at 841-864 (NMAGVFYMLLVAMGLSLLVFAWEH) threads the bilayer. At 865–1323 (LVYWRLRHCL…AHFSSLESEV (459 aa)) the chain is on the cytoplasmic side. Disordered stretches follow at residues 897-952 (EAAP…PGGA), 977-1112 (AAPR…SLGG), and 1201-1323 (PWAA…ESEV). Residues 899-929 (APPPAKPPPPPQPLPSPAYPAARPPPGPAPF) show a composition bias toward pro residues. A compositionally biased stretch (basic and acidic residues) spans 931–940 (PRERAAADRW). Over residues 977-986 (AAPRGAAGRP) the composition is skewed to low complexity. Pro residues predominate over residues 987-1001 (LSPPTTQPPQKPPPS). Residues 1030–1039 (AAAAAAVGPP) show a composition bias toward low complexity. Positions 1080–1092 (TAPPPRRAAPPPC) are enriched in pro residues. Basic residues predominate over residues 1208–1228 (PRRRARCGCPRPHPHRPRASH). An Omega-N-methylarginine modification is found at Arg-1303. Ser-1313 carries the post-translational modification Phosphoserine. A PDZ-binding motif is present at residues 1321 to 1323 (SEV).

Belongs to the glutamate-gated ion channel (TC 1.A.10.1) family. NR2D/GRIN2D subfamily. As to quaternary structure, heterotetramer. Forms heterotetrameric channels composed of two GluN1/zeta subunits (GRIN1), and two identical GluN2/epsilon subunits (GRIN2A, GRIN2B, GRIN2C or GRIN2D) or GluN3 subunits (GRIN3A or GRIN3B) (in vitro). In vivo, the subunit composition may depend on the expression levels of the different subunits. Interacts with PDZ domains of PATJ and DLG4. As to expression, expressed in brain, mainly in the subcortical region.

It localises to the cell membrane. The protein localises to the postsynaptic cell membrane. It carries out the reaction Ca(2+)(in) = Ca(2+)(out). The catalysed reaction is Na(+)(in) = Na(+)(out). The enzyme catalyses K(+)(in) = K(+)(out). Its function is as follows. Component of N-methyl-D-aspartate (NMDA) receptors (NMDARs) that function as heterotetrameric, ligand-gated cation channels with high calcium permeability and voltage-dependent block by Mg(2+). Participates in synaptic plasticity for learning and memory formation. Channel activation requires binding of the neurotransmitter L-glutamate to the GluN2 subunit, glycine or D-serine binding to the GluN1 subunit, plus membrane depolarization to eliminate channel inhibition by Mg(2+). NMDARs mediate simultaneously the potasium efflux and the influx of calcium and sodium. Each GluN2 subunit confers differential attributes to channel properties, including activation, deactivation and desensitization kinetics, pH sensitivity, Ca2(+) permeability, and binding to allosteric modulators. This Rattus norvegicus (Rat) protein is Glutamate receptor ionotropic, NMDA 2D.